The primary structure comprises 395 residues: Acetate kinase (395 aa).

N8 lines the Mg(2+) pocket. K15 contacts ATP. R89 is a binding site for substrate. Catalysis depends on D146, which acts as the Proton donor/acceptor. Residues 206–210, 281–283, and 329–333 contribute to the ATP site; these read HLGNG, DLR, and GIGEN. E382 serves as a coordination point for Mg(2+).

It belongs to the acetokinase family. Homodimer. Mg(2+) serves as cofactor. Mn(2+) is required as a cofactor.

The protein resides in the cytoplasm. The catalysed reaction is acetate + ATP = acetyl phosphate + ADP. It functions in the pathway metabolic intermediate biosynthesis; acetyl-CoA biosynthesis; acetyl-CoA from acetate: step 1/2. In terms of biological role, catalyzes the formation of acetyl phosphate from acetate and ATP. Can also catalyze the reverse reaction. The protein is Acetate kinase of Bacillus velezensis (strain DSM 23117 / BGSC 10A6 / LMG 26770 / FZB42) (Bacillus amyloliquefaciens subsp. plantarum).